The chain runs to 363 residues: MQTPTLGQLATENGAQVVGDPDLAITGLAPLDQAGPGELSFLSNPLYLQQALDAKAGAVIVSAADLERVRAEGKADGRNWLVARNPYVCFARVAQRFDRAANTDARTGIDARATVAPDAVVPASCYIGPNVVIEAGARLGERVRILANGYVGAHAQIGDDALLYANVSVYHHCVVGARAILHSGVVIGADGFGFAPDISASGVEYVKIPQTGRAVLGDDVEVGANTAIDRGAMADTVIEDGCKIDNQVQIAHNVRVGAHTVIAGCAAVSGSTRIGRFCVIGGAANFAGHLTIADRTTVSGGTSITKSITKPGGHFTSVFPFLPHGEWERNAAIVRGLSKLRERVVALERRLRGQAAGSQPSQD.

Histidine 252 serves as the catalytic Proton acceptor.

It belongs to the transferase hexapeptide repeat family. LpxD subfamily. In terms of assembly, homotrimer.

The enzyme catalyses a UDP-3-O-[(3R)-3-hydroxyacyl]-alpha-D-glucosamine + a (3R)-hydroxyacyl-[ACP] = a UDP-2-N,3-O-bis[(3R)-3-hydroxyacyl]-alpha-D-glucosamine + holo-[ACP] + H(+). It participates in bacterial outer membrane biogenesis; LPS lipid A biosynthesis. In terms of biological role, catalyzes the N-acylation of UDP-3-O-acylglucosamine using 3-hydroxyacyl-ACP as the acyl donor. Is involved in the biosynthesis of lipid A, a phosphorylated glycolipid that anchors the lipopolysaccharide to the outer membrane of the cell. In Cupriavidus taiwanensis (strain DSM 17343 / BCRC 17206 / CCUG 44338 / CIP 107171 / LMG 19424 / R1) (Ralstonia taiwanensis (strain LMG 19424)), this protein is UDP-3-O-acylglucosamine N-acyltransferase.